Consider the following 179-residue polypeptide: Adenine phosphoribosyltransferase (179 aa).

The protein belongs to the purine/pyrimidine phosphoribosyltransferase family. Homodimer.

It is found in the cytoplasm. The enzyme catalyses AMP + diphosphate = 5-phospho-alpha-D-ribose 1-diphosphate + adenine. Its pathway is purine metabolism; AMP biosynthesis via salvage pathway; AMP from adenine: step 1/1. Catalyzes a salvage reaction resulting in the formation of AMP, that is energically less costly than de novo synthesis. The chain is Adenine phosphoribosyltransferase from Bradyrhizobium sp. (strain ORS 278).